Here is a 104-residue protein sequence, read N- to C-terminus: Co-chaperonin GroES 2 (104 aa).

The protein belongs to the GroES chaperonin family. Heptamer of 7 subunits arranged in a ring. Interacts with the chaperonin GroEL.

The protein resides in the cytoplasm. Functionally, together with the chaperonin GroEL, plays an essential role in assisting protein folding. The GroEL-GroES system forms a nano-cage that allows encapsulation of the non-native substrate proteins and provides a physical environment optimized to promote and accelerate protein folding. GroES binds to the apical surface of the GroEL ring, thereby capping the opening of the GroEL channel. The polypeptide is Co-chaperonin GroES 2 (Rhodopseudomonas palustris (strain ATCC BAA-98 / CGA009)).